The sequence spans 66 residues: Surface composition regulator (66 aa).

This sequence belongs to the GlgS family.

Functionally, major determinant of cell surface composition. Negatively regulates motility, adhesion and synthesis of biofilm exopolysaccharides. This chain is Surface composition regulator, found in Shigella dysenteriae serotype 1 (strain Sd197).